Here is a 348-residue protein sequence, read N- to C-terminus: MVTIISTMETQANNGPGCVGILNGTNGEADDSKTNLIVNYLPQNMTQEEFKSLFGSIGEIESCKLVRDKITGQSLGYGFVNYVDPNDADKAINTLNGLKLQTKTIKVSYARPSSASIRDANLYVSSLPKTMNQKEMEQLFSQYGRIITSRILVDQVTGVSRGVGFIRFDKRIEAEEAIKGLNGQKPLGASEPITVKFANNPSQKTGQALLTHLYQTTARRYTGPLHHQTQRFSPLSILPRFSPITIDSVTNLAGVSLTGPTTAGWCIFVYNLSPEADESVLWQLFGPFGAVTNVKVIRDFTTNKCKGFGFVTMTNYDEAAMAIASLNGYRLGDRVLQVSFKTSKQHKA.

3 consecutive RRM domains span residues 34–112, 120–200, and 265–343; these read TNLI…YARP, ANLY…FANN, and WCIF…FKTS.

It belongs to the RRM elav family. Expression is neural-specific in both embryos and adults. Expressed from neurula stage onwards in primary motor-, inter- and sensory-neurons. Expressed in the closing neural tube and motor neurons of stage 18 embryos, and primarily in the ventricular zone and dorsal region of the tailbud and adult brain. Expressed from stage 26 onwards in the differentiating ganglion cell layer of the retina, extending to the inner nuclear layer at later stages.

RNA-binding protein that binds to AU-rich element (ARE) sequences of target mRNAs. May also bind poly-A tracts via RRM 3. May be involved in neuronal differentiation and maintenance. The protein is ELAV-like protein 3 (elavl3) of Xenopus laevis (African clawed frog).